The sequence spans 284 residues: uncharacterized protein (284 aa).

Residues 1-24 (MLYSRESRTTVLFLALVTSLTVLC) form the signal peptide. Residues 25–84 (HSVDVTTVFTTSTITEITTVTAAPQPQNKAETALNTATNIIQTMQFLFNCAPFKWKGPLK) are Cytoplasmic-facing. The chain crosses the membrane as a helical span at residues 85-104 (ITSCALNFIVLLLTAWGYLL). Over 105–284 (KYLQENKLNS…SVHMYSSSLL (180 aa)) the chain is Extracellular. An N-linked (GlcNAc...) asparagine glycan is attached at Asn270.

It to yeast YNL019c.

It localises to the cell membrane. This is an uncharacterized protein from Saccharomyces cerevisiae (strain ATCC 204508 / S288c) (Baker's yeast).